The sequence spans 146 residues: Metallothiol transferase FosB (146 aa).

Positions Gly4 to Gly120 constitute a VOC domain. Residues His7, His66, and Glu116 each contribute to the Mg(2+) site. The active-site Proton donor/acceptor is the Glu116.

The protein belongs to the fosfomycin resistance protein family. FosB subfamily. In terms of assembly, homodimer. Requires Mg(2+) as cofactor.

It is found in the cytoplasm. Metallothiol transferase which confers resistance to fosfomycin by catalyzing the addition of a thiol cofactor to fosfomycin. L-cysteine is probably the physiological thiol donor. This is Metallothiol transferase FosB from Shouchella clausii (strain KSM-K16) (Alkalihalobacillus clausii).